The following is a 590-amino-acid chain: Transcription factor GTE7 (590 aa).

A disordered region spans residues 125 to 160 (LNNFTGEKNDLGPKKKKQKKNVSGLKRSNQFGPSDP). Residues 164-270 (KLLAGMLNTC…DHFDGMFNPA (107 aa)) form the Bromo domain. Disordered stretches follow at residues 282-400 (TGSS…KDPN) and 476-590 (RQGF…EAQC). Residues 288-298 (PEPDFKPDFKQ) are compositionally biased toward basic and acidic residues. Positions 347–369 (PSPPPPPPVIQPELPQPQPPPPQ) are enriched in pro residues. An NET domain is found at 394-475 (PKAKDPNKRL…NYKKMASKIK (82 aa)). Residues 498 to 508 (SAEKRTRRGDA) show a composition bias toward basic and acidic residues. Over residues 509-521 (GEEDVDIGEDIPI) the composition is skewed to acidic residues. Residues 537–562 (AAAASSGSSSSGSSSSSGGSSSSSDS) are compositionally biased toward low complexity.

It localises to the nucleus. The sequence is that of Transcription factor GTE7 (GTE7) from Arabidopsis thaliana (Mouse-ear cress).